Consider the following 353-residue polypeptide: Elongation factor Ts (353 aa).

An involved in Mg(2+) ion dislocation from EF-Tu region spans residues 80–83 (TDFV).

Belongs to the EF-Ts family.

It is found in the cytoplasm. Its function is as follows. Associates with the EF-Tu.GDP complex and induces the exchange of GDP to GTP. It remains bound to the aminoacyl-tRNA.EF-Tu.GTP complex up to the GTP hydrolysis stage on the ribosome. This chain is Elongation factor Ts, found in Sulfurovum sp. (strain NBC37-1).